A 261-amino-acid chain; its full sequence is RING finger and CHY zinc finger domain-containing protein 1 (261 aa).

The CHY-type zinc-finger motif lies at 13-80 (LAQGPRGCEH…AQQTCEDCST (68 aa)). Residues cysteine 20, histidine 22, cysteine 33, cysteine 34, cysteine 40, cysteine 43, histidine 44, histidine 50, cysteine 62, cysteine 65, cysteine 75, cysteine 78, cysteine 87, cysteine 90, histidine 101, cysteine 102, cysteine 105, cysteine 108, histidine 118, cysteine 119, cysteine 122, cysteine 125, histidine 134, and cysteine 136 each contribute to the Zn(2+) site. The segment at 82–144 (FGEYYCSICH…KCIENVSRQN (63 aa)) adopts a CTCHY-type zinc-finger fold. An RING-type zinc finger spans residues 145–189 (CPICLEDIHTSRVVAHVLPCGHLLHRTCYEEMLKEGYRCPLCMHS).

Monomer and homodimer. Interacts with AR, MDM2, KAT5, PLAG1, PLAGL2, COPE, UBE2D2 and GORAB/NTKLBP1. In terms of processing, subject to ubiquitination and proteasomal degradation. Interaction with PLAGL2 or KAT5 enhances protein stability. In terms of tissue distribution, detected in testis, liver, kidney and heart.

Its subcellular location is the nucleus. The protein localises to the nucleus speckle. It is found in the cytoplasm. The enzyme catalyses S-ubiquitinyl-[E2 ubiquitin-conjugating enzyme]-L-cysteine + [acceptor protein]-L-lysine = [E2 ubiquitin-conjugating enzyme]-L-cysteine + N(6)-ubiquitinyl-[acceptor protein]-L-lysine.. It participates in protein modification; protein ubiquitination. Functionally, E3 ubiquitin-protein ligase that mediates ubiquitination of target proteins, including p53/TP53, TP73, HDAC1 and CDKN1B. Mediates ubiquitination and degradation of p53/TP53; preferentially acts on tetrameric p53/TP53. Catalyzes monoubiquitinates the translesion DNA polymerase POLH. Involved in the ribosome-associated quality control (RQC) pathway, which mediates the extraction of incompletely synthesized nascent chains from stalled ribosomes: RCHY1 acts downstream of NEMF and recognizes CAT tails associated with stalled nascent chains, leading to their ubiquitination and degradation. The protein is RING finger and CHY zinc finger domain-containing protein 1 (Rchy1) of Mus musculus (Mouse).